Reading from the N-terminus, the 404-residue chain is Cysteine desulfurase IscS (404 aa).

Pyridoxal 5'-phosphate is bound by residues 75 to 76 (AT), asparagine 155, glutamine 183, and 203 to 205 (SGH). The residue at position 206 (lysine 206) is an N6-(pyridoxal phosphate)lysine. Threonine 243 lines the pyridoxal 5'-phosphate pocket. Cysteine 328 serves as the catalytic Cysteine persulfide intermediate. Position 328 (cysteine 328) interacts with [2Fe-2S] cluster.

It belongs to the class-V pyridoxal-phosphate-dependent aminotransferase family. NifS/IscS subfamily. Homodimer. Forms a heterotetramer with IscU, interacts with other sulfur acceptors. The cofactor is pyridoxal 5'-phosphate.

The protein localises to the cytoplasm. The catalysed reaction is (sulfur carrier)-H + L-cysteine = (sulfur carrier)-SH + L-alanine. It participates in cofactor biosynthesis; iron-sulfur cluster biosynthesis. Master enzyme that delivers sulfur to a number of partners involved in Fe-S cluster assembly, tRNA modification or cofactor biosynthesis. Catalyzes the removal of elemental sulfur atoms from cysteine to produce alanine. Functions as a sulfur delivery protein for Fe-S cluster synthesis onto IscU, an Fe-S scaffold assembly protein, as well as other S acceptor proteins. The chain is Cysteine desulfurase IscS from Shewanella frigidimarina (strain NCIMB 400).